We begin with the raw amino-acid sequence, 124 residues long: Small ribosomal subunit protein bS6 (124 aa).

The tract at residues 96–124 (ETGPSPMMKEVQREEAKKAAAAQPTEAQA) is disordered. A compositionally biased stretch (low complexity) spans 114-124 (AAAAQPTEAQA).

The protein belongs to the bacterial ribosomal protein bS6 family.

Its function is as follows. Binds together with bS18 to 16S ribosomal RNA. This Burkholderia vietnamiensis (strain G4 / LMG 22486) (Burkholderia cepacia (strain R1808)) protein is Small ribosomal subunit protein bS6.